The primary structure comprises 118 residues: Large ribosomal subunit protein bL20 (118 aa).

The protein belongs to the bacterial ribosomal protein bL20 family.

Functionally, binds directly to 23S ribosomal RNA and is necessary for the in vitro assembly process of the 50S ribosomal subunit. It is not involved in the protein synthesizing functions of that subunit. The protein is Large ribosomal subunit protein bL20 of Enterobacter sp. (strain 638).